A 268-amino-acid chain; its full sequence is Stomatin homolog PYRAB06580 (268 aa).

The chain crosses the membrane as a helical span at residues 1 to 21 (MILPTNFFVTTIILLFILIFL). 2 coiled-coil regions span residues 125–152 (GQAH…EATD) and 178–213 (KQAE…ISEH).

It belongs to the band 7/mec-2 family. Homotrimer.

It localises to the membrane. This Pyrococcus abyssi (strain GE5 / Orsay) protein is Stomatin homolog PYRAB06580.